We begin with the raw amino-acid sequence, 369 residues long: Melanoma-associated antigen 10 (369 aa).

A disordered region spans residues 1 to 131 (MPRAPKRQRC…VLPDSESLPR (131 aa)). Residues 39–62 (SSSTSTSSSFPSSFPSSSSSSSSS) are compositionally biased toward low complexity. 2 stretches are compositionally biased toward polar residues: residues 85–96 (QSAQIACSSPSV) and 107–121 (EGSS…STLQ). An MAGE domain is found at 134–333 (IDEKVTDLVQ…RSFPLWYEEA (200 aa)). The disordered stretch occupies residues 340–369 (RAQDRIATTDDTTAMASASSSATGSFSYPE). The span at 348 to 369 (TDDTTAMASASSSATGSFSYPE) shows a compositional bias: low complexity.

Expressed in many tumors of several types, such as melanoma, head and neck squamous cell carcinoma, lung carcinoma and breast carcinoma, but not in normal tissues except for spermatogonia, spermatocytes and placenta.

The protein localises to the nucleus. Not known, though may play a role in embryonal development and tumor transformation or aspects of tumor progression. The protein is Melanoma-associated antigen 10 (MAGEA10) of Homo sapiens (Human).